The primary structure comprises 207 residues: dITP/XTP pyrophosphatase (207 aa).

10–15 (TRNAGK) lines the substrate pocket. The Mg(2+) site is built by Glu-43 and Asp-72. The active-site Proton acceptor is Asp-72. Residues Ser-73, 161–164 (FGYD), Lys-184, and 189–190 (HR) contribute to the substrate site.

This sequence belongs to the HAM1 NTPase family. As to quaternary structure, homodimer. Requires Mg(2+) as cofactor.

It catalyses the reaction XTP + H2O = XMP + diphosphate + H(+). It carries out the reaction dITP + H2O = dIMP + diphosphate + H(+). The enzyme catalyses ITP + H2O = IMP + diphosphate + H(+). Its function is as follows. Pyrophosphatase that catalyzes the hydrolysis of nucleoside triphosphates to their monophosphate derivatives, with a high preference for the non-canonical purine nucleotides XTP (xanthosine triphosphate), dITP (deoxyinosine triphosphate) and ITP. Seems to function as a house-cleaning enzyme that removes non-canonical purine nucleotides from the nucleotide pool, thus preventing their incorporation into DNA/RNA and avoiding chromosomal lesions. The chain is dITP/XTP pyrophosphatase from Nitratidesulfovibrio vulgaris (strain ATCC 29579 / DSM 644 / CCUG 34227 / NCIMB 8303 / VKM B-1760 / Hildenborough) (Desulfovibrio vulgaris).